Here is a 328-residue protein sequence, read N- to C-terminus: Renalase (328 aa).

FAD-binding positions include alanine 13, 32 to 33, arginine 40, and 56 to 57; these read DK and QY. Substrate contacts are provided by residues 57–61 and 96–98; these read YFTAR and SPD. Isoleucine 128 serves as a coordination point for FAD. Residue threonine 185 participates in substrate binding. Residue aspartate 302 participates in FAD binding. Arginine 308 contacts substrate. Position 309 (valine 309) interacts with FAD.

Belongs to the bacterial renalase family. FAD is required as a cofactor.

It carries out the reaction 1,2-dihydro-beta-NAD + O2 + H(+) = H2O2 + NAD(+). The enzyme catalyses 1,2-dihydro-beta-NADP + O2 + H(+) = H2O2 + NADP(+). It catalyses the reaction 1,6-dihydro-beta-NADP + O2 + H(+) = H2O2 + NADP(+). The catalysed reaction is 1,6-dihydro-beta-NAD + O2 + H(+) = H2O2 + NAD(+). In terms of biological role, catalyzes the oxidation of the 1,2-dihydro- and 1,6-dihydro- isomeric forms of beta-NAD(P) back to beta-NAD(P)+. Has a preference for 1,2-dihydro-beta-NAD as substrate. May serve to protect primary metabolism dehydrogenases from inhibition by the 1,2-dihydro- and 1,6-dihydro-beta-NAD(P) isomers. The protein is Renalase of Pseudomonas syringae pv. tomato (strain ATCC BAA-871 / DC3000).